We begin with the raw amino-acid sequence, 335 residues long: Methylthioribose-1-phosphate isomerase (335 aa).

Substrate is bound by residues Arg-43–Ala-45, Arg-86, and Gln-193. Asp-234 acts as the Proton donor in catalysis. Asn-244 to Lys-245 contacts substrate.

It belongs to the eIF-2B alpha/beta/delta subunits family. MtnA subfamily.

The catalysed reaction is 5-(methylsulfanyl)-alpha-D-ribose 1-phosphate = 5-(methylsulfanyl)-D-ribulose 1-phosphate. It participates in amino-acid biosynthesis; L-methionine biosynthesis via salvage pathway; L-methionine from S-methyl-5-thio-alpha-D-ribose 1-phosphate: step 1/6. Functionally, catalyzes the interconversion of methylthioribose-1-phosphate (MTR-1-P) into methylthioribulose-1-phosphate (MTRu-1-P). The chain is Methylthioribose-1-phosphate isomerase from Parabacteroides distasonis (strain ATCC 8503 / DSM 20701 / CIP 104284 / JCM 5825 / NCTC 11152).